The sequence spans 956 residues: UvrABC system protein A (956 aa).

33 to 40 (GLSGSGKS) lines the ATP pocket. A C4-type zinc finger spans residues 252 to 279 (CPYCGFSVGELEPRMFSFNSPFGACPTC). ABC transporter domains lie at 309-587 (WRPI…KNSI) and 607-936 (GNGL…KYLK). ATP is bound at residue 639-646 (GVSGSGKS). The C4-type zinc-finger motif lies at 738-764 (CEACKGDGIIKIEMHFLPDVYVPCEVC).

It belongs to the ABC transporter superfamily. UvrA family. As to quaternary structure, forms a heterotetramer with UvrB during the search for lesions.

It is found in the cytoplasm. The UvrABC repair system catalyzes the recognition and processing of DNA lesions. UvrA is an ATPase and a DNA-binding protein. A damage recognition complex composed of 2 UvrA and 2 UvrB subunits scans DNA for abnormalities. When the presence of a lesion has been verified by UvrB, the UvrA molecules dissociate. This is UvrABC system protein A from Listeria innocua serovar 6a (strain ATCC BAA-680 / CLIP 11262).